The sequence spans 187 residues: uncharacterized protein (187 aa).

The N-terminal stretch at 1–17 (MYAGGRVVRSAFARGKV) is a signal peptide. A lipid anchor (N-palmitoyl cysteine) is attached at Cys18. Residue Cys18 is the site of S-diacylglycerol cysteine attachment.

The protein resides in the cell membrane. This is an uncharacterized protein from Treponema pallidum (strain Nichols).